Consider the following 389-residue polypeptide: E3 ubiquitin-protein ligase E3D (389 aa).

The residue at position 2 (Ala-2) is an N-acetylalanine. The BRAT1-like motif motif lies at 129 to 159 (PLPSENWGALVGEWCCHPDPFANKSLHPQEN). A Zn(2+)-binding site is contributed by Cys-144. The interaction with UBE2C stretch occupies residues 235 to 257 (QSSERSFPIIPRSWFVQSVIAQC). The segment at 353–389 (LPSATCLELLLILSKSNANLPSSLRRVNSFQVAFLKM) is HECT-like.

In terms of assembly, interacts with UBE2C/UbcH10 (E2 ubiquitin-conjugating enzyme). In vitro, interacts with cyclin-B. Ubiquitinated by UBCH10 (E2 ubiquitin-conjugating enzyme).

The protein localises to the cytoplasm. It catalyses the reaction S-ubiquitinyl-[E2 ubiquitin-conjugating enzyme]-L-cysteine + [acceptor protein]-L-lysine = [E2 ubiquitin-conjugating enzyme]-L-cysteine + N(6)-ubiquitinyl-[acceptor protein]-L-lysine.. The protein operates within protein modification; protein ubiquitination. In terms of biological role, E3 ubiquitin-protein ligase which accepts ubiquitin from specific E2 ubiquitin-conjugating enzymes, and transfers it to substrates, generally promoting their degradation by the proteasome. Independently of its E3 ubiquitin-protein ligase activity, acts as an inhibitor of CPSF3 endonuclease activity by blocking CPSF3 active site. The polypeptide is E3 ubiquitin-protein ligase E3D (UBE3D) (Homo sapiens (Human)).